The chain runs to 274 residues: Dermonecrotic toxin SdSicTox-betaIIB2ii (274 aa).

Histidine 5 is a catalytic residue. Positions 25 and 27 each coordinate Mg(2+). Histidine 41 serves as the catalytic Nucleophile. Cystine bridges form between cysteine 45–cysteine 51 and cysteine 47–cysteine 190. Aspartate 85 is a Mg(2+) binding site.

Belongs to the arthropod phospholipase D family. Class II subfamily. Mg(2+) serves as cofactor. Expressed by the venom gland.

Its subcellular location is the secreted. It catalyses the reaction an N-(acyl)-sphingosylphosphocholine = an N-(acyl)-sphingosyl-1,3-cyclic phosphate + choline. It carries out the reaction an N-(acyl)-sphingosylphosphoethanolamine = an N-(acyl)-sphingosyl-1,3-cyclic phosphate + ethanolamine. The catalysed reaction is a 1-acyl-sn-glycero-3-phosphocholine = a 1-acyl-sn-glycero-2,3-cyclic phosphate + choline. The enzyme catalyses a 1-acyl-sn-glycero-3-phosphoethanolamine = a 1-acyl-sn-glycero-2,3-cyclic phosphate + ethanolamine. In terms of biological role, dermonecrotic toxins cleave the phosphodiester linkage between the phosphate and headgroup of certain phospholipids (sphingolipid and lysolipid substrates), forming an alcohol (often choline) and a cyclic phosphate. This toxin acts on sphingomyelin (SM). It may also act on ceramide phosphoethanolamine (CPE), lysophosphatidylcholine (LPC) and lysophosphatidylethanolamine (LPE), but not on lysophosphatidylserine (LPS), and lysophosphatidylglycerol (LPG). It acts by transphosphatidylation, releasing exclusively cyclic phosphate products as second products. Induces dermonecrosis, hemolysis, increased vascular permeability, edema, inflammatory response, and platelet aggregation. This is Dermonecrotic toxin SdSicTox-betaIIB2ii from Sicarius cf. damarensis (strain GJB-2008) (Six-eyed sand spider).